The primary structure comprises 325 residues: Tagatose 1,6-diphosphate aldolase (325 aa).

It belongs to the aldolase LacD family.

The enzyme catalyses D-tagatofuranose 1,6-bisphosphate = D-glyceraldehyde 3-phosphate + dihydroxyacetone phosphate. It functions in the pathway carbohydrate metabolism; D-tagatose 6-phosphate degradation; D-glyceraldehyde 3-phosphate and glycerone phosphate from D-tagatose 6-phosphate: step 2/2. The polypeptide is Tagatose 1,6-diphosphate aldolase (Staphylococcus haemolyticus (strain JCSC1435)).